Consider the following 126-residue polypeptide: Calcitonin receptor-stimulating peptide 1 (126 aa).

Residues 1–25 form the signal peptide; that stretch reads MGFWKFPPFLVLSILVLYQAGMFHT. The propeptide occupies 26–78; sequence APMRSAFGSPFDPATLSEEESRLLLAAMVNDYEQMKAREMQKQRAQGSGISVQ. C82 and C87 are oxidised to a cystine. Position 118 is a glycine amide (G118). A propeptide spanning residues 123 to 126 is cleaved from the precursor; the sequence is NFWI.

In terms of tissue distribution, mainly expressed in the thyroid gland and CNS. Found in the nerve cells of cerebrum, hippocampus, hypothalamus, pons/midbrain and thalamus.

Its subcellular location is the secreted. Functionally, stimulates cAMP production in porcine kidney cell line LLC-PK1 via the calcitonin receptor (CT) but not via the CT-like (CL) receptor. The protein is Calcitonin receptor-stimulating peptide 1 (CRSP1) of Sus scrofa (Pig).